The sequence spans 443 residues: 26S proteasome regulatory subunit 4 homolog B (443 aa).

2 disordered regions span residues 1–55 (MGQG…LPTV) and 87–108 (RLKPQEEKAEEDRSKVDDLRGT). Basic and acidic residues-rich tracts occupy residues 12–28 (QGDRKPDGGEKKEKKFE) and 87–106 (RLKPQEEKAEEDRSKVDDLR). ATP is bound at residue 229-236 (GEPGTGKT). Glycyl lysine isopeptide (Lys-Gly) (interchain with G-Cter in ubiquitin) cross-links involve residues Lys-296 and Lys-433.

This sequence belongs to the AAA ATPase family. As to quaternary structure, component of the 19S regulatory particle (RP/PA700) base subcomplex of the 26S proteasome. The 26S proteasome is composed of a core protease (CP), known as the 20S proteasome, capped at one or both ends by the 19S regulatory particle (RP/PA700). The RP/PA700 complex is composed of at least 17 different subunits in two subcomplexes, the base and the lid, which form the portions proximal and distal to the 20S proteolytic core, respectively. In terms of tissue distribution, preferentially expressed in the root and shoot apical meristem.

It is found in the cytoplasm. It localises to the nucleus. In terms of biological role, the 26S protease is involved in the ATP-dependent degradation of ubiquitinated proteins. The regulatory (or ATPase) complex confers ATP dependency and substrate specificity to the 26S complex. Acts redundantly with RPT2A in the regulation of gametogenesis. With RPT2A plays a critical role in 26S proteasome assembly. The sequence is that of 26S proteasome regulatory subunit 4 homolog B from Arabidopsis thaliana (Mouse-ear cress).